Here is a 336-residue protein sequence, read N- to C-terminus: Probable G-protein coupled receptor 82 (336 aa).

At 1–11 (MNNNTTCIQPS) the chain is on the extracellular side. 2 N-linked (GlcNAc...) asparagine glycosylation sites follow: asparagine 3 and asparagine 4. A helical membrane pass occupies residues 12–32 (MISSMALPIIYILLCIVGVFG). Residues 33 to 55 (NTLSQWIFLTKIGKKTSTHIYLS) are Cytoplasmic-facing. Residues 56-76 (HLVTANLLVCSAMPFMSIYFL) form a helical membrane-spanning segment. Residues 77 to 92 (KGFQWEYQSAQCRVVN) lie on the Extracellular side of the membrane. The helical transmembrane segment at 93–115 (FLGTLSMHASMFVSLLILSWIAI) threads the bilayer. The Cytoplasmic portion of the chain corresponds to 116–156 (SRYATLMQKDSSQETTSCYEKIFYGHLLKKFRQPNFARKLC). A helical transmembrane segment spans residues 157–177 (IYIWGVVLGIIIPVTVYYSVI). Topologically, residues 178 to 197 (EATEGEESLCYNRQMELGAM) are extracellular. Residues 198–218 (ISQIAGLIGTTFIGFSFLVVL) traverse the membrane as a helical segment. Over 219–251 (TSYYSFVSHLRKIRTCTSIMEKDLTYSSVKRHL) the chain is Cytoplasmic. The chain crosses the membrane as a helical span at residues 252–272 (LVIQILLIVCFLPYSIFKPIF). The Extracellular portion of the chain corresponds to 273–336 (YVLHQRDNCQ…SNSAHMQSYG (64 aa)).

This sequence belongs to the G-protein coupled receptor 1 family.

The protein localises to the cell membrane. Its function is as follows. Orphan receptor. In Homo sapiens (Human), this protein is Probable G-protein coupled receptor 82 (GPR82).